The primary structure comprises 526 residues: piRNA biogenesis factor prde-1 (526 aa).

The interval 436 to 526 (EAKEEPIDKK…RRRGCEIRRK (91 aa)) is disordered. Over residues 439 to 448 (EEPIDKKKDP) the composition is skewed to basic and acidic residues. Residues 458–467 (GKKRRGRKPK) show a composition bias toward basic residues. The segment covering 468–487 (KKDDPKMELKDEVKDLKDFV) has biased composition (basic and acidic residues). Residues 489 to 498 (EESTSASSSA) are compositionally biased toward low complexity.

Expressed in male and female germ cells.

The protein localises to the nucleus. It is found in the chromosome. Its function is as follows. Nuclear factor required for the production of piwi-interacting RNA (piRNA) precursors. Specifically required for piRNAs produced from loci associated with the Ruby motif. Promotes binding of the transcription factor snpc-4 at piRNA genomic clusters. Required for normal fertility. This is piRNA biogenesis factor prde-1 from Caenorhabditis elegans.